Consider the following 468-residue polypeptide: GDNF family receptor alpha-1 (468 aa).

A signal peptide spans 1 to 24 (MFLATLYFVLPLLDLLMSAEVSGG). A run of 3 repeats spans residues 25 to 113 (DRLD…LQGN), 150 to 238 (KGNN…YEER), and 239 to 342 (ERPN…KNAI). A disulfide bond links C36 and C42. A glycan (N-linked (GlcNAc...) asparagine) is linked at N59. 10 disulfides stabilise this stretch: C154/C214, C161/C167, C178/C192, C187/C233, C216/C221, C243/C313, C250/C256, C267/C285, C277/C337, and C315/C325. N-linked (GlcNAc...) asparagine glycosylation is found at N347 and N406. A lipid anchor (GPI-anchor amidated serine) is attached at S430. Positions 431–468 (HITTKSMAAPPSCGLSSLPVMVFTALAALLSVSLAETS) are cleaved as a propeptide — removed in mature form.

Belongs to the GDNFR family. In terms of assembly, interacts with GDNF ligand and RET: forms a 2:2:2 ternary complex composed of GDNF ligand, GFRA1 and RET receptor. Interacts with SORL1, either alone or in complex with GDNF. Interaction between SORL1 and GFRA1 leads to GFRA1 internalization, but not degradation. In terms of tissue distribution, expressed in the brain, in hippocampal neurons (at protein level). Isoform 1 and isoform 2 are expressed in heart, brain, lung, liver, kidney and testis.

It localises to the cell membrane. The protein resides in the golgi apparatus. It is found in the trans-Golgi network. Its subcellular location is the endosome. The protein localises to the multivesicular body. Coreceptor for GDNF, a neurotrophic factor that enhances survival and morphological differentiation of dopaminergic neurons and increases their high-affinity dopamine uptake. GDNF-binding leads to autophosphorylation and activation of the RET receptor. This is GDNF family receptor alpha-1 (Gfra1) from Mus musculus (Mouse).